The primary structure comprises 358 residues: UDP-N-acetylglucosamine--N-acetylmuramyl-(pentapeptide) pyrophosphoryl-undecaprenol N-acetylglucosamine transferase (358 aa).

Positions 166, 196, and 291 each coordinate UDP-N-acetyl-alpha-D-glucosamine.

Belongs to the glycosyltransferase 28 family. MurG subfamily.

The protein localises to the cell membrane. It carries out the reaction Mur2Ac(oyl-L-Ala-gamma-D-Glu-L-Lys-D-Ala-D-Ala)-di-trans,octa-cis-undecaprenyl diphosphate + UDP-N-acetyl-alpha-D-glucosamine = beta-D-GlcNAc-(1-&gt;4)-Mur2Ac(oyl-L-Ala-gamma-D-Glu-L-Lys-D-Ala-D-Ala)-di-trans,octa-cis-undecaprenyl diphosphate + UDP + H(+). It participates in cell wall biogenesis; peptidoglycan biosynthesis. Functionally, cell wall formation. Catalyzes the transfer of a GlcNAc subunit on undecaprenyl-pyrophosphoryl-MurNAc-pentapeptide (lipid intermediate I) to form undecaprenyl-pyrophosphoryl-MurNAc-(pentapeptide)GlcNAc (lipid intermediate II). The protein is UDP-N-acetylglucosamine--N-acetylmuramyl-(pentapeptide) pyrophosphoryl-undecaprenol N-acetylglucosamine transferase of Staphylococcus saprophyticus subsp. saprophyticus (strain ATCC 15305 / DSM 20229 / NCIMB 8711 / NCTC 7292 / S-41).